A 232-amino-acid chain; its full sequence is 5'-methylthioadenosine/S-adenosylhomocysteine nucleosidase (232 aa).

Residue Glu12 is the Proton acceptor of the active site. Substrate contacts are provided by residues Gly78, Ile152, and Met173 to Glu174. Residue Asp197 is the Proton donor of the active site.

This sequence belongs to the PNP/UDP phosphorylase family. MtnN subfamily. Homodimer.

It catalyses the reaction S-adenosyl-L-homocysteine + H2O = S-(5-deoxy-D-ribos-5-yl)-L-homocysteine + adenine. The catalysed reaction is S-methyl-5'-thioadenosine + H2O = 5-(methylsulfanyl)-D-ribose + adenine. It carries out the reaction 5'-deoxyadenosine + H2O = 5-deoxy-D-ribose + adenine. It functions in the pathway amino-acid biosynthesis; L-methionine biosynthesis via salvage pathway; S-methyl-5-thio-alpha-D-ribose 1-phosphate from S-methyl-5'-thioadenosine (hydrolase route): step 1/2. Catalyzes the irreversible cleavage of the glycosidic bond in both 5'-methylthioadenosine (MTA) and S-adenosylhomocysteine (SAH/AdoHcy) to adenine and the corresponding thioribose, 5'-methylthioribose and S-ribosylhomocysteine, respectively. Also cleaves 5'-deoxyadenosine, a toxic by-product of radical S-adenosylmethionine (SAM) enzymes, into 5-deoxyribose and adenine. Thus, is required for in vivo function of the radical SAM enzymes biotin synthase and lipoic acid synthase, that are inhibited by 5'-deoxyadenosine accumulation. The chain is 5'-methylthioadenosine/S-adenosylhomocysteine nucleosidase from Escherichia coli O7:K1 (strain IAI39 / ExPEC).